A 550-amino-acid polypeptide reads, in one-letter code: Methionine--tRNA ligase (550 aa).

The 'HIGH' region motif lies at 13 to 23 (PYANGPLHFGH). Zn(2+) is bound by residues cysteine 145, cysteine 148, cysteine 158, and cysteine 161. The 'KMSKS' region signature appears at 331 to 335 (QFSKS). Lysine 334 serves as a coordination point for ATP.

The protein belongs to the class-I aminoacyl-tRNA synthetase family. MetG type 1 subfamily. Monomer. Zn(2+) is required as a cofactor.

The protein localises to the cytoplasm. The catalysed reaction is tRNA(Met) + L-methionine + ATP = L-methionyl-tRNA(Met) + AMP + diphosphate. Functionally, is required not only for elongation of protein synthesis but also for the initiation of all mRNA translation through initiator tRNA(fMet) aminoacylation. The chain is Methionine--tRNA ligase (metG) from Chlamydia muridarum (strain MoPn / Nigg).